The chain runs to 130 residues: Ribonuclease P protein component 2 (130 aa).

This sequence belongs to the eukaryotic/archaeal RNase P protein component 2 family. As to quaternary structure, consists of a catalytic RNA component and at least 4-5 protein subunits.

It localises to the cytoplasm. The catalysed reaction is Endonucleolytic cleavage of RNA, removing 5'-extranucleotides from tRNA precursor.. Part of ribonuclease P, a protein complex that generates mature tRNA molecules by cleaving their 5'-ends. This chain is Ribonuclease P protein component 2, found in Methanococcus maripaludis (strain C5 / ATCC BAA-1333).